A 331-amino-acid chain; its full sequence is Biotin synthase (331 aa).

The region spanning 46 to 275 is the Radical SAM core domain; the sequence is YYGKKVKLNM…TKEIRISGGR (230 aa). Positions 64, 68, and 71 each coordinate [4Fe-4S] cluster. [2Fe-2S] cluster-binding residues include Cys108, Cys140, Cys200, and Arg270.

It belongs to the radical SAM superfamily. Biotin synthase family. As to quaternary structure, homodimer. [4Fe-4S] cluster is required as a cofactor. Requires [2Fe-2S] cluster as cofactor.

It catalyses the reaction (4R,5S)-dethiobiotin + (sulfur carrier)-SH + 2 reduced [2Fe-2S]-[ferredoxin] + 2 S-adenosyl-L-methionine = (sulfur carrier)-H + biotin + 2 5'-deoxyadenosine + 2 L-methionine + 2 oxidized [2Fe-2S]-[ferredoxin]. Its pathway is cofactor biosynthesis; biotin biosynthesis; biotin from 7,8-diaminononanoate: step 2/2. Its function is as follows. Catalyzes the conversion of dethiobiotin (DTB) to biotin by the insertion of a sulfur atom into dethiobiotin via a radical-based mechanism. In Lysinibacillus sphaericus (strain C3-41), this protein is Biotin synthase.